Consider the following 205-residue polypeptide: Ephrin-A1 (205 aa).

Residues 1-18 form the signal peptide; sequence MEFLWAPLLGLCCSLAAA. In terms of domain architecture, Ephrin RBD spans 19–151; the sequence is DRHTVFWNSS…KLKVTVSGKI (133 aa). Asn26 carries N-linked (GlcNAc...) asparagine glycosylation. 2 cysteine pairs are disulfide-bonded: Cys51-Cys92 and Cys80-Cys140. Ser182 carries GPI-anchor amidated serine lipidation. Positions 183–205 are cleaved as a propeptide — removed in mature form; sequence AAPRLSPLAWAVLLLPFLLLQTS.

The protein belongs to the ephrin family. Monomer. Homodimer. Forms heterodimers with EPHA2. Binds to the receptor tyrosine kinases EPHA2, EPHA3, EPHA4, EPHA5, EPHA6 and EPHA7. Also binds with low affinity to EPHA1. In terms of processing, undergoes proteolysis by a metalloprotease to give rise to a soluble monomeric form. N-Glycosylation is required for binding to EPHA2 receptor and inducing its internalization.

The protein localises to the cell membrane. It is found in the secreted. Functionally, cell surface GPI-bound ligand for Eph receptors, a family of receptor tyrosine kinases which are crucial for migration, repulsion and adhesion during neuronal, vascular and epithelial development. Binds promiscuously Eph receptors residing on adjacent cells, leading to contact-dependent bidirectional signaling into neighboring cells. Plays an important role in angiogenesis and tumor neovascularization. The recruitment of VAV2, VAV3 and PI3-kinase p85 subunit by phosphorylated EPHA2 is critical for EFNA1-induced RAC1 GTPase activation and vascular endothelial cell migration and assembly. Exerts anti-oncogenic effects in tumor cells through activation and down-regulation of EPHA2. Activates EPHA2 by inducing tyrosine phosphorylation which leads to its internalization and degradation. Acts as a negative regulator in the tumorigenesis of gliomas by down-regulating EPHA2 and FAK. Can evoke collapse of embryonic neuronal growth cone and regulates dendritic spine morphogenesis. The sequence is that of Ephrin-A1 (EFNA1) from Sus scrofa (Pig).